The following is a 59-amino-acid chain: KNKCQLPSDVGKGKASFTRYFYNEESGKCETFIYGGMGGNSNNFLTKEACCRECAQGSC.

The region spanning 4 to 54 (CQLPSDVGKGKASFTRYFYNEESGKCETFIYGGMGGNSNNFLTKEACCREC) is the BPTI/Kunitz inhibitor domain. Cystine bridges form between cysteine 4–cysteine 54, cysteine 29–cysteine 50, and cysteine 51–cysteine 59.

This sequence belongs to the venom Kunitz-type family. Scorpion delta-Ktx subfamily. Delta-Ktx 2 sub-subfamily. As to expression, expressed by the venom gland.

The protein resides in the secreted. In terms of biological role, serine protease inhibitor that inhibits trypsin at a molar ratio of 1:1 (Ki=124 nM). This chain is Kunitz-type serine protease inhibitor LmKTT-1c, found in Lychas mucronatus (Chinese swimming scorpion).